We begin with the raw amino-acid sequence, 408 residues long: MSWDQVWIDVNLATMDPSVSAPYGAITNAAIAVKDGKIAWLGPRSELPAFDVLSIPVYRGKGGWITPGLIDAHTHLIFAGNRANEFELRLQGASYEDIARADGGIISTVKACREADEAELFELGRQRLNALAKEGVTTVEIKSGYGLDTETELKILRVARELGKHHHVDVKTTFLGAHAIPPEYKDNSDGYVDLIINKMLPAVIAENLADAVDVFCENIAFNLEQTERVLSAAKAAGLEIKLHAEQLTNMGGSALAARLGAKSVDHIEYLDEAGVKALSESGTCAVLLPGAFYFLRETQKPPIDLLRQYGVPMVLASDFNPGSSPICSTLLMLNMGCTLFRLTPEEALTGLTLNAAKALGIEDNVGSLVVGKQADFCLWDIATPAQLAYSYGVNPCKDVVKNGKLVHQ.

H73 and H75 together coordinate Fe(3+). Zn(2+) is bound by residues H73 and H75. 3 residues coordinate 4-imidazolone-5-propanoate: R82, Y145, and H178. Y145 is a binding site for N-formimidoyl-L-glutamate. H243 is a Fe(3+) binding site. H243 provides a ligand contact to Zn(2+). Q246 contributes to the 4-imidazolone-5-propanoate binding site. D318 provides a ligand contact to Fe(3+). Zn(2+) is bound at residue D318. N-formimidoyl-L-glutamate is bound by residues N320 and G322. S323 is a 4-imidazolone-5-propanoate binding site.

It belongs to the metallo-dependent hydrolases superfamily. HutI family. Requires Zn(2+) as cofactor. Fe(3+) is required as a cofactor.

The protein resides in the cytoplasm. The enzyme catalyses 4-imidazolone-5-propanoate + H2O = N-formimidoyl-L-glutamate. Its pathway is amino-acid degradation; L-histidine degradation into L-glutamate; N-formimidoyl-L-glutamate from L-histidine: step 3/3. Its function is as follows. Catalyzes the hydrolytic cleavage of the carbon-nitrogen bond in imidazolone-5-propanoate to yield N-formimidoyl-L-glutamate. It is the third step in the universal histidine degradation pathway. This is Imidazolonepropionase from Shewanella sp. (strain W3-18-1).